Here is a 1047-residue protein sequence, read N- to C-terminus: Ubiquitin carboxyl-terminal hydrolase 28 (1047 aa).

Disordered stretches follow at residues aspartate 60–lysine 95 and serine 110–valine 138. Residues glutamate 94 to alanine 113 form the UIM domain. The segment covering proline 111 to lysine 128 has biased composition (basic and acidic residues). The USP domain maps to valine 156–aspartate 651. The active-site Nucleophile is cysteine 165. Over residues serine 461–aspartate 486 the composition is skewed to polar residues. The interval serine 461 to cysteine 528 is disordered. Basic and acidic residues predominate over residues leucine 489–aspartate 498. The span at alanine 504–leucine 516 shows a compositional bias: polar residues. Histidine 601 functions as the Proton acceptor in the catalytic mechanism. The disordered stretch occupies residues glutamate 694–leucine 735. Residues lysine 705–serine 717 are compositionally biased toward polar residues.

It belongs to the peptidase C19 family. USP28 subfamily.

It localises to the nucleus. It is found in the nucleoplasm. It carries out the reaction Thiol-dependent hydrolysis of ester, thioester, amide, peptide and isopeptide bonds formed by the C-terminal Gly of ubiquitin (a 76-residue protein attached to proteins as an intracellular targeting signal).. Deubiquitinase involved in DNA damage response checkpoint and MYC proto-oncogene stability. Involved in DNA damage induced apoptosis by specifically deubiquitinating proteins of the DNA damage pathway such as CLSPN. Also involved in G2 DNA damage checkpoint, by deubiquitinating CLSPN, and preventing its degradation by the anaphase promoting complex/cyclosome (APC/C). Specifically deubiquitinates MYC in the nucleoplasm, leading to prevent MYC degradation by the proteasome. Deubiquitinates ZNF304, hence may prevent ZNF304 degradation by the proteasome, leading to the activated KRAS-mediated promoter hypermethylation and transcriptional silencing of tumor suppressor genes (TSGs). This Gallus gallus (Chicken) protein is Ubiquitin carboxyl-terminal hydrolase 28 (USP28).